A 361-amino-acid polypeptide reads, in one-letter code: MSTPRKAAGNNENTEVSEIRTPFRERALEEQRLKDEVLIRNTPGYRKLLSASTKSHDILNKDPNEVRSFLQDLSQVLARKSQGNDTTTNKTQARNLIDELAYEESQPEENELLRSRSEKLTDNNIGNETQPDYTSLSQTVFAKLQERDKGLKSRKIDPIIIQDVPTTGHEDELTVHSPDKANSISMEVLRTSPSIGMDQVDEPPVRDPVPISITQQEEPLSEDLPSDDKEETEEAENEDYSFENTSDENLDDIGNDPIRLNVPAVRRSSIKPLQIMDLKHLTRQFLNENRIILPKQTWSTIQEESLNIMDFLKQKIGTLQKQELVDSFIDMGIINNVDDMFELAHELLPLELQSRIESYLF.

The segment at Met1–Pro22 is disordered. Ser2 is modified (phosphoserine; by CDK1). At Thr14 the chain carries Phosphothreonine; by CDK1 and MPS1. Ser17 is modified (phosphoserine; by CDK1 and MPS1). 2 positions are modified to phosphothreonine; by CDK1: Thr21 and Thr42. Position 50 is a phosphoserine; by CDK1 and MPS1 (Ser50). Ser52 carries the phosphoserine; by CDK1 modification. Thr53 carries the phosphothreonine; by MPS1 modification. A Phosphoserine; by CDK1 modification is found at Ser55. Residues Asn60–Asn84 are interacts with the NDC80 complex subunits SPC24 and SPC25 and with the KNL1 complex. Ser74 is subject to Phosphoserine; by CDK1 and MPS1. A phosphothreonine; by MPS1 mark is found at Thr86 and Thr88. Thr91 is modified (phosphothreonine; by CDK1 and MPS1). The interval Glu103–Asp132 is disordered. Over residues Glu111–Thr121 the composition is skewed to basic and acidic residues. Ser115 is subject to Phosphoserine; by CDK1. The span at Asp122–Asp132 shows a compositional bias: polar residues. Thr129 is subject to Phosphothreonine; by CDK1 and MPS1. Thr134 is subject to Phosphothreonine; by MPS1. At Ser135 the chain carries Phosphoserine; by MPS1. Position 139 is a phosphothreonine; by CDK1 and MPS1 (Thr139). The residue at position 153 (Ser153) is a Phosphoserine; by MPS1. At Thr174 the chain carries Phosphothreonine; by MPS1. Ser177 carries the phosphoserine; by CDK1 modification. Thr191 is modified (phosphothreonine; by CDK1). Residue Ser192 is modified to Phosphoserine; by CDK1. The tract at residues Pro193–Asn255 is disordered. The span at Pro219–Gly254 shows a compositional bias: acidic residues. Residue Ser268 is modified to Phosphoserine; by CDK1. Residue Ser269 is modified to Phosphoserine; by MPS1 and IPL1.

Belongs to the CENP-T/CNN1 family. Component of the inner kinetochore constitutive centromere-associated network (CCAN) (also known as central kinetochore CTF19 complex in yeast), which is composed of at least AME1, CHL4, CNN1, CTF3, CTF19, IML3, MCM16, MCM21, MCM22, MHF1, MHF2, MIF2, NKP1, NKP2, OKP1 and WIP1. Interacts (via N-terminus) with the outer kinetochore NDC80 complex subunits SPC24 (via C-terminus) and SPC25 (via C-terminus); the interaction is direct and contributes to the correct spatiotemporal organization of the KMN network. Interacts with outer kinetochore MIS12 complex subunit NNF1. Interacts (via N-terminus) with the KNL1 complex. Phosphorylation of the C-terminus by MPS1 kinase regulates interaction with the outer kinetochore Ndc80 complex. Phosphorylation levels rise from S-phase and through metaphase, the protein is thendephosphorylated in anaphase.

It is found in the nucleus. The protein resides in the chromosome. Its subcellular location is the centromere. The protein localises to the kinetochore. Component of the kinetochore, a multiprotein complex that assembles on centromeric DNA and attaches chromosomes to spindle microtubules, mediating chromosome segregation and sister chromatid segregation during meiosis and mitosis. Component of the inner kinetochore constitutive centromere-associated network (CCAN), which serves as a structural platform for outer kinetochore assembly. Modulates outer kinetochore KMN network activity by regulating interactions within the network. The chain is Inner kinetochore subunit CNN1 (CNN1) from Saccharomyces cerevisiae (strain ATCC 204508 / S288c) (Baker's yeast).